An 818-amino-acid polypeptide reads, in one-letter code: Glycogen phosphorylase (818 aa).

An N6-(pyridoxal phosphate)lysine modification is found at Lys-667.

It belongs to the glycogen phosphorylase family. It depends on pyridoxal 5'-phosphate as a cofactor.

The enzyme catalyses [(1-&gt;4)-alpha-D-glucosyl](n) + phosphate = [(1-&gt;4)-alpha-D-glucosyl](n-1) + alpha-D-glucose 1-phosphate. Phosphorylase is an important allosteric enzyme in carbohydrate metabolism. Enzymes from different sources differ in their regulatory mechanisms and in their natural substrates. However, all known phosphorylases share catalytic and structural properties. The polypeptide is Glycogen phosphorylase (glgP) (Pasteurella multocida (strain Pm70)).